A 179-amino-acid polypeptide reads, in one-letter code: Arginine repressor (179 aa).

Belongs to the ArgR family.

The protein localises to the cytoplasm. Its pathway is amino-acid biosynthesis; L-arginine biosynthesis [regulation]. Functionally, regulates arginine biosynthesis genes. This Renibacterium salmoninarum (strain ATCC 33209 / DSM 20767 / JCM 11484 / NBRC 15589 / NCIMB 2235) protein is Arginine repressor.